We begin with the raw amino-acid sequence, 436 residues long: GDP-mannose 6-dehydrogenase (436 aa).

Positions 10, 11, 30, 35, 86, and 124 each coordinate NAD(+). Positions 161, 210, 214, 217, 225, 256, 257, 259, 262, and 265 each coordinate GDP-alpha-D-mannuronate. The active-site Nucleophile is the Cys268. An NAD(+)-binding site is contributed by Lys271. The inter-domain linker stretch occupies residues 278–295; that stretch reads YRASQLDVEHPMLGSLMR. Lys324 is a GDP-alpha-D-mannuronate binding site. An NAD(+)-binding site is contributed by Arg331.

It belongs to the UDP-glucose/GDP-mannose dehydrogenase family. Forms a domain-swapped dimer with each peptide contributing to each active site. The dimers assemble further. X-ray structures indicate this enzyme exists as a homotetramer PubMed:12705829, but kinetic and physical results obtained in PubMed:2470755 and PubMed:12135385 indicate that it is probably a homohexamer.

The enzyme catalyses GDP-alpha-D-mannose + 2 NAD(+) + H2O = GDP-alpha-D-mannuronate + 2 NADH + 3 H(+). The protein operates within glycan biosynthesis; alginate biosynthesis. Inhibited by GMP, ATP, GDP-D-glucose and maltose. Inhibited by GMP and deamidoNAD. Its function is as follows. Catalyzes the oxidation of guanosine diphospho-D-mannose (GDP-D-mannose) to GDP-D-mannuronic acid, a precursor for alginate polymerization. The alginate layer causes a mucoid phenotype and provides a protective barrier against host immune defenses and antibiotics. Other sugars are not used as substrates. This chain is GDP-mannose 6-dehydrogenase, found in Pseudomonas aeruginosa (strain ATCC 15692 / DSM 22644 / CIP 104116 / JCM 14847 / LMG 12228 / 1C / PRS 101 / PAO1).